The sequence spans 354 residues: Elongation factor Ts (354 aa).

The interval 81–84 (TDFV) is involved in Mg(2+) ion dislocation from EF-Tu.

The protein belongs to the EF-Ts family.

The protein resides in the cytoplasm. Its function is as follows. Associates with the EF-Tu.GDP complex and induces the exchange of GDP to GTP. It remains bound to the aminoacyl-tRNA.EF-Tu.GTP complex up to the GTP hydrolysis stage on the ribosome. The chain is Elongation factor Ts from Campylobacter concisus (strain 13826).